Here is a 410-residue protein sequence, read N- to C-terminus: Peptidase T (410 aa).

Zn(2+) is bound at residue histidine 79. The active site involves aspartate 81. Aspartate 142 is a Zn(2+) binding site. The active-site Proton acceptor is glutamate 176. Glutamate 177, aspartate 199, and histidine 381 together coordinate Zn(2+).

It belongs to the peptidase M20B family. Zn(2+) serves as cofactor.

The protein resides in the cytoplasm. The enzyme catalyses Release of the N-terminal residue from a tripeptide.. Cleaves the N-terminal amino acid of tripeptides. The protein is Peptidase T of Geobacillus sp. (strain WCH70).